The sequence spans 554 residues: Carboxylesterase 1C (554 aa).

Positions 1–18 are cleaved as a signal peptide; it reads MWLHALVWASLAVCPILG. The N-linked (GlcNAc...) asparagine glycan is linked to Asn79. An intrachain disulfide couples Cys87 to Cys116. Ser221 acts as the Acyl-ester intermediate in catalysis. Residues Cys273 and Cys284 are joined by a disulfide bond. 2 N-linked (GlcNAc...) asparagine glycosylation sites follow: Asn274 and Asn304. Glu342 acts as the Charge relay system in catalysis. A glycan (N-linked (GlcNAc...) asparagine) is linked at Asn377. The Charge relay system role is filled by His455. A Phosphoserine modification is found at Ser473. A glycan (N-linked (GlcNAc...) asparagine) is linked at Asn478. The Prevents secretion from ER motif lies at 551 to 554; that stretch reads TEHK.

The protein belongs to the type-B carboxylesterase/lipase family. Expressed in lung, kidney and liver.

The protein localises to the endoplasmic reticulum lumen. It carries out the reaction a carboxylic ester + H2O = an alcohol + a carboxylate + H(+). In terms of biological role, involved in the detoxification of xenobiotics and in the activation of ester and amide prodrugs. Involved in the extracellular metabolism of lung surfactant. The chain is Carboxylesterase 1C (Ces1c) from Mus musculus (Mouse).